A 591-amino-acid polypeptide reads, in one-letter code: Aspartate--tRNA ligase (591 aa).

Position 176 (Glu176) interacts with L-aspartate. The aspartate stretch occupies residues 200 to 203; the sequence is QILK. Arg222 serves as a coordination point for L-aspartate. Residues 222–224 and Gln231 contribute to the ATP site; that span reads RDE. Residue His450 coordinates L-aspartate. An ATP-binding site is contributed by Glu484. Arg491 provides a ligand contact to L-aspartate. 536 to 539 contributes to the ATP binding site; it reads GLDR.

The protein belongs to the class-II aminoacyl-tRNA synthetase family. Type 1 subfamily. In terms of assembly, homodimer.

It is found in the cytoplasm. It carries out the reaction tRNA(Asp) + L-aspartate + ATP = L-aspartyl-tRNA(Asp) + AMP + diphosphate. Its function is as follows. Catalyzes the attachment of L-aspartate to tRNA(Asp) in a two-step reaction: L-aspartate is first activated by ATP to form Asp-AMP and then transferred to the acceptor end of tRNA(Asp). The polypeptide is Aspartate--tRNA ligase (Listeria welshimeri serovar 6b (strain ATCC 35897 / DSM 20650 / CCUG 15529 / CIP 8149 / NCTC 11857 / SLCC 5334 / V8)).